The sequence spans 414 residues: Gamma-glutamyl phosphate reductase (414 aa).

Belongs to the gamma-glutamyl phosphate reductase family.

The protein localises to the cytoplasm. It carries out the reaction L-glutamate 5-semialdehyde + phosphate + NADP(+) = L-glutamyl 5-phosphate + NADPH + H(+). It functions in the pathway amino-acid biosynthesis; L-proline biosynthesis; L-glutamate 5-semialdehyde from L-glutamate: step 2/2. Its function is as follows. Catalyzes the NADPH-dependent reduction of L-glutamate 5-phosphate into L-glutamate 5-semialdehyde and phosphate. The product spontaneously undergoes cyclization to form 1-pyrroline-5-carboxylate. This is Gamma-glutamyl phosphate reductase from Francisella philomiragia subsp. philomiragia (strain ATCC 25017 / CCUG 19701 / FSC 153 / O#319-036).